Reading from the N-terminus, the 297-residue chain is UDP-N-acetylenolpyruvoylglucosamine reductase (297 aa).

In terms of domain architecture, FAD-binding PCMH-type spans 24-189 (KVGGNAEIFF…LKAIFKVNKG (166 aa)). Arg169 is a catalytic residue. Ser218 (proton donor) is an active-site residue. Glu289 is a catalytic residue.

The protein belongs to the MurB family. Requires FAD as cofactor.

The protein resides in the cytoplasm. It catalyses the reaction UDP-N-acetyl-alpha-D-muramate + NADP(+) = UDP-N-acetyl-3-O-(1-carboxyvinyl)-alpha-D-glucosamine + NADPH + H(+). Its pathway is cell wall biogenesis; peptidoglycan biosynthesis. Functionally, cell wall formation. The polypeptide is UDP-N-acetylenolpyruvoylglucosamine reductase (Rickettsia canadensis (strain McKiel)).